The primary structure comprises 55 residues: Caltrin-like protein 2 (55 aa).

In terms of domain architecture, WAP spans 7 to 55 (AINRPGSCPRVMIYCPARHPPNKCTSDYDCPKPQKCCPGYCGKQCYQPE).

In terms of processing, glycosylated.

Functionally, inhibits calcium transport into spermatozoa. The chain is Caltrin-like protein 2 from Cavia porcellus (Guinea pig).